The primary structure comprises 153 residues: Transcriptional repressor NrdR (153 aa).

A zinc finger spans residues 3–33 (CPYCNYKESKVIDSRHTDLKSIRRRRECESC). An ATP-cone domain is found at 48-138 (LMVIKKDNSR…VYRQFKDINT (91 aa)).

It belongs to the NrdR family. The cofactor is Zn(2+).

Its function is as follows. Negatively regulates transcription of bacterial ribonucleotide reductase nrd genes and operons by binding to NrdR-boxes. The chain is Transcriptional repressor NrdR from Clostridioides difficile (strain 630) (Peptoclostridium difficile).